A 67-amino-acid chain; its full sequence is UPF0435 protein SSP0913 (67 aa).

Belongs to the UPF0435 family.

This is UPF0435 protein SSP0913 from Staphylococcus saprophyticus subsp. saprophyticus (strain ATCC 15305 / DSM 20229 / NCIMB 8711 / NCTC 7292 / S-41).